The primary structure comprises 515 residues: 2-isopropylmalate synthase (515 aa).

A Pyruvate carboxyltransferase domain is found at 4-266 (IKFFDTTLRD…ETRLNLQEIK (263 aa)). Residues D13, H201, H203, and N237 each coordinate Mn(2+). Residues 391 to 515 (QLSSIQVQYG…RGENEKVATP (125 aa)) are regulatory domain.

This sequence belongs to the alpha-IPM synthase/homocitrate synthase family. LeuA type 1 subfamily. As to quaternary structure, homodimer. Mn(2+) is required as a cofactor.

The protein localises to the cytoplasm. It carries out the reaction 3-methyl-2-oxobutanoate + acetyl-CoA + H2O = (2S)-2-isopropylmalate + CoA + H(+). It functions in the pathway amino-acid biosynthesis; L-leucine biosynthesis; L-leucine from 3-methyl-2-oxobutanoate: step 1/4. Catalyzes the condensation of the acetyl group of acetyl-CoA with 3-methyl-2-oxobutanoate (2-ketoisovalerate) to form 3-carboxy-3-hydroxy-4-methylpentanoate (2-isopropylmalate). This is 2-isopropylmalate synthase from Geobacillus kaustophilus (strain HTA426).